We begin with the raw amino-acid sequence, 158 residues long: MIRIGHGFDVHKFGGEGPVIIGGVAVPYEQGLIAHSDGDVALHALSDALLGAIAAGDIGRHFPDTDDKWKGVDSRELLKDVYRRVKEQGYKLGNADVTIIAQAPKMAPYIDAMREAIAHDLETDIRNINVKATTTERLGFTGRKEGIATEAVVLLIKQ.

2 residues coordinate a divalent metal cation: aspartate 9 and histidine 11. Residues 9–11 (DVH) and 35–36 (HS) each bind 4-CDP-2-C-methyl-D-erythritol 2-phosphate. Position 43 (histidine 43) interacts with a divalent metal cation. 4-CDP-2-C-methyl-D-erythritol 2-phosphate contacts are provided by residues 57-59 (DIG), 62-66 (FPDTD), 101-107 (AQAPKMA), 133-136 (TTTE), phenylalanine 140, and arginine 143.

It belongs to the IspF family. Homotrimer. A divalent metal cation serves as cofactor.

The enzyme catalyses 4-CDP-2-C-methyl-D-erythritol 2-phosphate = 2-C-methyl-D-erythritol 2,4-cyclic diphosphate + CMP. The protein operates within isoprenoid biosynthesis; isopentenyl diphosphate biosynthesis via DXP pathway; isopentenyl diphosphate from 1-deoxy-D-xylulose 5-phosphate: step 4/6. Its function is as follows. Involved in the biosynthesis of isopentenyl diphosphate (IPP) and dimethylallyl diphosphate (DMAPP), two major building blocks of isoprenoid compounds. Catalyzes the conversion of 4-diphosphocytidyl-2-C-methyl-D-erythritol 2-phosphate (CDP-ME2P) to 2-C-methyl-D-erythritol 2,4-cyclodiphosphate (ME-CPP) with a corresponding release of cytidine 5-monophosphate (CMP). This chain is 2-C-methyl-D-erythritol 2,4-cyclodiphosphate synthase, found in Vibrio vulnificus (strain CMCP6).